The following is a 210-amino-acid chain: Uridine kinase (210 aa).

ATP is bound at residue 12-19 (GGSGSGKT).

Belongs to the uridine kinase family.

It localises to the cytoplasm. The enzyme catalyses uridine + ATP = UMP + ADP + H(+). It catalyses the reaction cytidine + ATP = CMP + ADP + H(+). The protein operates within pyrimidine metabolism; CTP biosynthesis via salvage pathway; CTP from cytidine: step 1/3. It functions in the pathway pyrimidine metabolism; UMP biosynthesis via salvage pathway; UMP from uridine: step 1/1. The chain is Uridine kinase from Bacillus pumilus (strain SAFR-032).